Consider the following 274-residue polypeptide: Putative outer membrane protein CPn_1073/CP_0776/CPj1073/CpB1118 (274 aa).

An N-terminal signal peptide occupies residues Met-1–Ala-21.

It localises to the cell outer membrane. The chain is Putative outer membrane protein CPn_1073/CP_0776/CPj1073/CpB1118 from Chlamydia pneumoniae (Chlamydophila pneumoniae).